The sequence spans 1367 residues: DNA polymerase III PolC-type (1367 aa).

One can recognise an Exonuclease domain in the interval 358–513; it reads FVVLDFETTG…DDARVTAQVF (156 aa).

It belongs to the DNA polymerase type-C family. PolC subfamily.

Its subcellular location is the cytoplasm. The catalysed reaction is DNA(n) + a 2'-deoxyribonucleoside 5'-triphosphate = DNA(n+1) + diphosphate. Required for replicative DNA synthesis. This DNA polymerase also exhibits 3' to 5' exonuclease activity. This Thermotoga petrophila (strain ATCC BAA-488 / DSM 13995 / JCM 10881 / RKU-1) protein is DNA polymerase III PolC-type.